A 256-amino-acid chain; its full sequence is Follistatin-related protein 3 (256 aa).

A signal peptide spans Met1 to Ala23. The TB domain occupies Gly34–Gly105. Intrachain disulfides connect Cys36–Cys59, Cys46–Cys90, Cys60–Cys93, Cys97–Cys108, Cys102–Cys117, Cys119–Cys151, Cys123–Cys144, and Cys133–Cys165. Asn71 carries an N-linked (GlcNAc...) asparagine glycan. Residues Cys97–Cys117 enclose the Follistatin-like 1 domain. Kazal-like domains follow at residues Leu111 to Lys167 and Ser187 to Gly243. The region spanning Ser168–Val191 is the Follistatin-like 2 domain. Cystine bridges form between Cys193–Cys227, Cys198–Cys220, and Cys209–Cys241. Residue Asn213 is glycosylated (N-linked (GlcNAc...) asparagine).

Interacts with INHBA and INHBB. Interacts with FN1. Interacts with ADAM12. Interacts with MLLT10; the interaction enhances MLLT10 in vitro transcriptional activity and self-association. Interacts with MSTN.

Its subcellular location is the secreted. The protein resides in the nucleus. The secreted form is a binding and antagonizing protein for members of the TGF-beta family, such as activin, BMP2 and MSTN. Inhibits activin A-, activin B-, BMP2- and MSDT-induced cellular signaling; more effective on activin A than on activin B. Involved in bone formation; inhibits osteoclast differentiation. Involved in hematopoiesis; involved in differentiation of hemopoietic progenitor cells, increases hematopoietic cell adhesion to fibronectin and seems to contribute to the adhesion of hematopoietic precursor cells to the bone marrow stroma. The nuclear form is probably involved in transcriptional regulation via interaction with MLLT10. This Rattus norvegicus (Rat) protein is Follistatin-related protein 3 (Fstl3).